Consider the following 259-residue polypeptide: MKRISLIALVTIMSGCTMLEPIETPEVVNATTVVDAVEGDKSKDESSGIVDTLRGRSDPVAGDPAWAPIHPKQQPEHYAAETGSLFSVNHLSNLYDDSKPRGVGDIITVTLDEKTNASKSANADLSKSNDSSMDPLEVGGQELKIDGKYNFSYNLTNSNNFTGDASAKQSNSISGYITVEVIEVLANGNLVIRGEKWLTLNTGDEYIRLSGTIRPDDISFDNTIASNRVSNARIQYSGTGTQQDMQEPGFLARFFNVSL.

The signal sequence occupies residues methionine 1 to glycine 15. Cysteine 16 is lipidated: N-palmitoyl cysteine. Cysteine 16 is lipidated: S-diacylglycerol cysteine.

Belongs to the FlgH family. The basal body constitutes a major portion of the flagellar organelle and consists of four rings (L,P,S, and M) mounted on a central rod.

The protein localises to the cell outer membrane. It localises to the bacterial flagellum basal body. Assembles around the rod to form the L-ring and probably protects the motor/basal body from shearing forces during rotation. The protein is Flagellar L-ring protein of Vibrio vulnificus (strain CMCP6).